The following is a 615-amino-acid chain: Medium-chain acyl-CoA ligase ACSF2, mitochondrial (615 aa).

The transit peptide at 1–49 (MAVYLGMLRLGRLCVASLGARGPRTPLSRPWPNSKLQGVRAFSSGMVDC) directs the protein to the mitochondrion. K179 is modified (N6-acetyllysine). K182 carries the N6-acetyllysine; alternate modification. An N6-succinyllysine; alternate modification is found at K182. K199 carries the N6-acetyllysine modification. 263-271 (TSGTTGNPK) lines the ATP pocket. 2 positions are modified to N6-acetyllysine: K340 and K398. K478 carries the post-translational modification N6-succinyllysine. Residues D493 and R508 each contribute to the ATP site. At K510 the chain carries N6-acetyllysine. N6-acetyllysine; alternate occurs at positions 544 and 570. An N6-succinyllysine; alternate mark is found at K544 and K570. ATP is bound at residue K599. Position 599 is an N6-succinyllysine (K599).

The protein belongs to the ATP-dependent AMP-binding enzyme family.

Its subcellular location is the mitochondrion. It catalyses the reaction a medium-chain fatty acid + ATP + CoA = a medium-chain fatty acyl-CoA + AMP + diphosphate. It carries out the reaction octanoate + ATP + CoA = octanoyl-CoA + AMP + diphosphate. Acyl-CoA synthases catalyze the initial reaction in fatty acid metabolism, by forming a thioester with CoA. Has some preference toward medium-chain substrates. Plays a role in adipocyte differentiation. This chain is Medium-chain acyl-CoA ligase ACSF2, mitochondrial, found in Rattus norvegicus (Rat).